An 802-amino-acid chain; its full sequence is Phenylalanine--tRNA ligase beta subunit (802 aa).

The region spanning 39-150 (AKALKPFTIA…ADAPIGAAYA (112 aa)) is the tRNA-binding domain. In terms of domain architecture, B5 spans 400–475 (GDDRVIDFPV…RIYGVDKVPM (76 aa)). Residues Asp-453, Asp-459, Glu-462, and Glu-463 each coordinate Mg(2+). One can recognise an FDX-ACB domain in the interval 708-801 (SAFQPVSRDF…VTKKTGGTLR (94 aa)).

Belongs to the phenylalanyl-tRNA synthetase beta subunit family. Type 1 subfamily. Tetramer of two alpha and two beta subunits. Mg(2+) is required as a cofactor.

The protein localises to the cytoplasm. The catalysed reaction is tRNA(Phe) + L-phenylalanine + ATP = L-phenylalanyl-tRNA(Phe) + AMP + diphosphate + H(+). The sequence is that of Phenylalanine--tRNA ligase beta subunit from Bradyrhizobium diazoefficiens (strain JCM 10833 / BCRC 13528 / IAM 13628 / NBRC 14792 / USDA 110).